The sequence spans 326 residues: GTP 3',8-cyclase (326 aa).

The Radical SAM core domain occupies 7–240 (AFARKFYYLR…AQVFHHSDYQ (234 aa)). Residue Arg-16 coordinates GTP. Cys-23 and Cys-27 together coordinate [4Fe-4S] cluster. Tyr-29 contributes to the S-adenosyl-L-methionine binding site. Cys-30 is a binding site for [4Fe-4S] cluster. Arg-65 contacts GTP. Gly-69 contacts S-adenosyl-L-methionine. Thr-96 is a GTP binding site. Ser-120 contributes to the S-adenosyl-L-methionine binding site. A GTP-binding site is contributed by Lys-157. Met-191 contributes to the S-adenosyl-L-methionine binding site. [4Fe-4S] cluster-binding residues include Cys-254 and Cys-257. 259-261 (RLR) provides a ligand contact to GTP. Cys-271 serves as a coordination point for [4Fe-4S] cluster.

Belongs to the radical SAM superfamily. MoaA family. As to quaternary structure, monomer and homodimer. The cofactor is [4Fe-4S] cluster.

It carries out the reaction GTP + AH2 + S-adenosyl-L-methionine = (8S)-3',8-cyclo-7,8-dihydroguanosine 5'-triphosphate + 5'-deoxyadenosine + L-methionine + A + H(+). It functions in the pathway cofactor biosynthesis; molybdopterin biosynthesis. Catalyzes the cyclization of GTP to (8S)-3',8-cyclo-7,8-dihydroguanosine 5'-triphosphate. In Yersinia pestis, this protein is GTP 3',8-cyclase.